The sequence spans 307 residues: GTPase Era (307 aa).

An Era-type G domain is found at 7 to 181 (RCGWVALMGP…VELIRKKLPK (175 aa)). The tract at residues 15–22 (GPPNAGKS) is G1. A GTP-binding site is contributed by 15–22 (GPPNAGKS). The G2 stretch occupies residues 41–45 (QTTRN). The interval 62–65 (DTPG) is G3. Residues 62 to 66 (DTPGL) and 130 to 133 (NKVD) contribute to the GTP site. The G4 stretch occupies residues 130–133 (NKVD). The interval 160 to 162 (ISA) is G5. Residues 212 to 290 (LRQEVPYSVA…HLELWVKVRE (79 aa)) enclose the KH type-2 domain.

It belongs to the TRAFAC class TrmE-Era-EngA-EngB-Septin-like GTPase superfamily. Era GTPase family. Monomer.

The protein localises to the cytoplasm. It localises to the cell inner membrane. Functionally, an essential GTPase that binds both GDP and GTP, with rapid nucleotide exchange. Plays a role in 16S rRNA processing and 30S ribosomal subunit biogenesis and possibly also in cell cycle regulation and energy metabolism. In Desulfovibrio desulfuricans (strain ATCC 27774 / DSM 6949 / MB), this protein is GTPase Era.